Consider the following 476-residue polypeptide: Bifunctional protein HldE (476 aa).

The segment at 1–319 is ribokinase; it reads MKVSLPAFEK…EALALHHGES (319 aa). An ATP-binding site is contributed by 195-198; that stretch reads NMSE. The active site involves Asp264. Residues 345–476 are cytidylyltransferase; that stretch reads MTNGCFDILH…AIIQNIMANQ (132 aa).

It in the N-terminal section; belongs to the carbohydrate kinase PfkB family. This sequence in the C-terminal section; belongs to the cytidylyltransferase family. Homodimer.

The enzyme catalyses D-glycero-beta-D-manno-heptose 7-phosphate + ATP = D-glycero-beta-D-manno-heptose 1,7-bisphosphate + ADP + H(+). The catalysed reaction is D-glycero-beta-D-manno-heptose 1-phosphate + ATP + H(+) = ADP-D-glycero-beta-D-manno-heptose + diphosphate. It participates in nucleotide-sugar biosynthesis; ADP-L-glycero-beta-D-manno-heptose biosynthesis; ADP-L-glycero-beta-D-manno-heptose from D-glycero-beta-D-manno-heptose 7-phosphate: step 1/4. The protein operates within nucleotide-sugar biosynthesis; ADP-L-glycero-beta-D-manno-heptose biosynthesis; ADP-L-glycero-beta-D-manno-heptose from D-glycero-beta-D-manno-heptose 7-phosphate: step 3/4. Its function is as follows. Catalyzes the phosphorylation of D-glycero-D-manno-heptose 7-phosphate at the C-1 position to selectively form D-glycero-beta-D-manno-heptose-1,7-bisphosphate. Functionally, catalyzes the ADP transfer from ATP to D-glycero-beta-D-manno-heptose 1-phosphate, yielding ADP-D-glycero-beta-D-manno-heptose. This Shewanella baltica (strain OS195) protein is Bifunctional protein HldE.